A 254-amino-acid chain; its full sequence is uncharacterized protein (254 aa).

This is an uncharacterized protein from Haemophilus influenzae (strain ATCC 51907 / DSM 11121 / KW20 / Rd).